The following is a 107-amino-acid chain: Early E3A 12.5 kDa protein (107 aa).

The protein belongs to the adenoviridae E3A-2 family.

The sequence is that of Early E3A 12.5 kDa protein from Homo sapiens (Human).